A 391-amino-acid chain; its full sequence is Na(+)/H(+) antiporter NhaA (391 aa).

The next 11 helical transmembrane spans lie at 14–34 (AGGILLMAAVILAMIMANSPL), 59–79 (LIHWINDGLMALFFMLIGLEV), 95–115 (SLPTFAAIGGMIFPAAIYLIF), 124–144 (VGWAIPAATDIAFALGIMALL), 154–174 (VFLLALAIIDDLGVVVIIAMF), 177–197 (TDLSAISLVVAALAIVILVGL), 213–233 (LILWIAVLKSGVHATLAGVII), 261–281 (FVILPIFAFANAGVDLSGMSL), 292–312 (IALGLLLGKPLGVLLFSFVAV), 331–351 (VAVMCGIGFTMSMFISSLAFI), and 363–383 (LGILTGSIMSAVIGYFWLSKV).

It belongs to the NhaA Na(+)/H(+) (TC 2.A.33) antiporter family.

It is found in the cell inner membrane. It catalyses the reaction Na(+)(in) + 2 H(+)(out) = Na(+)(out) + 2 H(+)(in). Its function is as follows. Na(+)/H(+) antiporter that extrudes sodium in exchange for external protons. This chain is Na(+)/H(+) antiporter NhaA, found in Shewanella loihica (strain ATCC BAA-1088 / PV-4).